Consider the following 527-residue polypeptide: Arginine--tRNA ligase (527 aa).

Positions Ala-112 to His-122 match the 'HIGH' region motif.

It belongs to the class-I aminoacyl-tRNA synthetase family. As to quaternary structure, monomer.

Its subcellular location is the cytoplasm. The catalysed reaction is tRNA(Arg) + L-arginine + ATP = L-arginyl-tRNA(Arg) + AMP + diphosphate. The protein is Arginine--tRNA ligase of Nitratiruptor sp. (strain SB155-2).